The following is a 113-amino-acid chain: uncharacterized protein (113 aa).

The protein localises to the mitochondrion. This is an uncharacterized protein from Arabidopsis thaliana (Mouse-ear cress).